The chain runs to 421 residues: Ethanolamine-phosphate cytidylyltransferase (421 aa).

A helical transmembrane segment spans residues 8 to 28 (IVGSCIVGGAAFAVGASFLHL). A disordered region spans residues 203 to 227 (SRSSLQRQFSHGHSSPKFEDGASSA). Over residues 204–215 (RSSLQRQFSHGH) the composition is skewed to polar residues. CTP contacts are provided by residues 262–263 (AF), 270–273 (HVEI), Arg-298, 346–349 (HGTV), and 377–381 (SPLDI). A disordered region spans residues 402 to 421 (AKKEASEKKYYEQKSFVSGD). Over residues 403–413 (KKEASEKKYYE) the composition is skewed to basic and acidic residues. Ser-416 is modified (phosphoserine).

The protein belongs to the cytidylyltransferase family. As to expression, expressed in root tip, lateral root primordia, leaves, shoot apex, stem vascular bundles, pollen and embryos.

The protein resides in the mitochondrion outer membrane. The catalysed reaction is phosphoethanolamine + CTP + H(+) = CDP-ethanolamine + diphosphate. Its pathway is phospholipid metabolism; phosphatidylethanolamine biosynthesis; phosphatidylethanolamine from ethanolamine: step 2/3. Plays an important role in the biosynthesis of the phospholipid phosphatidylethanolamine. Catalyzes the formation of CDP-ethanolamine. Essential for early embryonic development. In Arabidopsis thaliana (Mouse-ear cress), this protein is Ethanolamine-phosphate cytidylyltransferase.